The primary structure comprises 271 residues: Phosphonates import ATP-binding protein PhnC 2 (271 aa).

Positions 2-246 (LTVDNLEKTY…ARDEIYRGGE (245 aa)) constitute an ABC transporter domain. Residue 35 to 42 (GPSGAGKS) participates in ATP binding. Basic and acidic residues predominate over residues 243–254 (RGGESIADREEP). A disordered region spans residues 243–271 (RGGESIADREEPSAGNSTDADDVIAERGD).

It belongs to the ABC transporter superfamily. Phosphonates importer (TC 3.A.1.9.1) family. In terms of assembly, the complex is composed of two ATP-binding proteins (PhnC), two transmembrane proteins (PhnE) and a solute-binding protein (PhnD).

It localises to the cell membrane. The catalysed reaction is phosphonate(out) + ATP + H2O = phosphonate(in) + ADP + phosphate + H(+). In terms of biological role, part of the ABC transporter complex PhnCDE involved in phosphonates import. Responsible for energy coupling to the transport system. The chain is Phosphonates import ATP-binding protein PhnC 2 from Haloarcula marismortui (strain ATCC 43049 / DSM 3752 / JCM 8966 / VKM B-1809) (Halobacterium marismortui).